The following is a 1183-amino-acid chain: MAGQFVQYGRHRKRRNYARISEVLELPNLIEIQTKSYDWFLEEGLLEMFRDISPIEDFTGNLSLEFVDYRLGEPKYDLEESKNRDTTYSAPLRVKVRLIIKETGEVKEQEVFMGDFPLMTDTGTFVINGAERVIVSQLVRSPSVYFNEKLDKNGRTNFDATIIPNRGAWLEYETDAKDVVYVRIDRTRKLPLTVLLRALGFSTDQEIVDLLGDNEYLRNTLEKDGTETTDQALLEIYERLRPGEPPTVENAKSLLYSRFFDPKRYDLASVGRYKANKKLHLKHRLFNQKLAEPIVNTETGEIVAEEGTVLDRRNLDEIMDVLEANANSEVFELEGTVIDEPVEIQSIKVYVPNDEEGRTTTVIGNAFPDSEVKCITPADIIASMSYFFNLLSGIGFTDDIDHLGNRRLRSVGELLQNQFRIGLSRMERVVRERMSIQDTDSVTPQQLINIRPVIASIKEFFGSSQLSQFMDQANPLAELTHKRRLSALGPGGLTRERAQMEVRDVHYSHYGRMCPIETPEGPNIGLINSLSSYARVNEFGFIETPYRKVDLETNSITDQIDYLTADEEDSYVVAQANSTLDENGRFIADEVVCRFRGNNTVMAKEKMDYMDVSPKQVVSAATACIPFLENDDSNRALMGANMQRQAVPLMNPESPFVGTGMEHVAARDSGAAIVAKRKGRVEHVESNEILVRQLIEEDGQEYEGELDRYPLAKFKRSNTGTCYNQRPIVASGDVVTKGEILADGPSMELGEMALGRNVVVGFMTWDGYNYEDAVIMSERLVKDDVYTSIHIEEYESEARDTKLGPEEITRDIPNVSDSALKNLDDRGIVYVGAEVNDGDILVGKVTPKGVTELTAEERLLHAIFGEKAREVRDTSLRVPHGAGGIVLDVKVFNREEGDDTLSPGVNQLVRVYIVQKRKIHVGDKMCGRHGNKGVISKLVPEEDMPYLPDGTPIDIMLNPLGVPSRMNIGQVLELHLGMAAKNLGIHVASPVFDGASDEDVWSTIEEAGMARDGKTVLYDGRTGEPFDNRISVGVMYMLKLAHMVDDKLHARSTGPYSLVTQQPLGGKAQFGGQRFGEMEVWALEAYGAAYTLQEILTYKSDDTVGRVKTYESIVKGENITKPGVPESFRVLMKELQSLGLDVKIMDEHDNEIDMQDNEEEDVVERKVDLQQKDAPQSQKEVTD.

Positions Asp-1153–Val-1162 are enriched in acidic residues. The tract at residues Asp-1153–Asp-1183 is disordered. A compositionally biased stretch (polar residues) spans Asp-1173–Asp-1183.

It belongs to the RNA polymerase beta chain family. As to quaternary structure, the RNAP catalytic core consists of 2 alpha, 1 beta, 1 beta' and 1 omega subunit. When a sigma factor is associated with the core the holoenzyme is formed, which can initiate transcription.

It catalyses the reaction RNA(n) + a ribonucleoside 5'-triphosphate = RNA(n+1) + diphosphate. In terms of biological role, DNA-dependent RNA polymerase catalyzes the transcription of DNA into RNA using the four ribonucleoside triphosphates as substrates. This chain is DNA-directed RNA polymerase subunit beta, found in Staphylococcus saprophyticus subsp. saprophyticus (strain ATCC 15305 / DSM 20229 / NCIMB 8711 / NCTC 7292 / S-41).